The sequence spans 566 residues: APC/C activator protein CDH1 (566 aa).

Over residues 1 to 18 (MSTNLNPFMNNTPSSSPL) the composition is skewed to polar residues. The tract at residues 1–56 (MSTNLNPFMNNTPSSSPLKGSESKRVSKRPISSSSSASLLSSPSRRSRPSTVYGDR) is disordered. Positions 29–44 (RPISSSSSASLLSSPS) are enriched in low complexity. The C-box signature appears at 55–61 (DRYIPSR). Ser213 is modified (phosphoserine). 7 WD repeats span residues 258-298 (PSLA…VVHL), 300-339 (DTENEYTSLSWIGAGSHLAVGQANGLVEIYDVMKRKCIRT), 342-379 (GHIDRVACLSWNNHVLTSGSRDHRILHRDVRMPDPFFE), 383-422 (SHTQEVCGLKWNVADNKLASGGNDNVVHVYEGTSKSPILT), 425-467 (EHKA…KMSD), 469-510 (DSGS…PIAI), and 513-552 (GHSFRVLHLTLSNDGTTVVSGAGDETLRYWKLFDKPKAKV).

Belongs to the WD repeat CDC20/Fizzy family. Associates with the APC/C complex. Interacts with CLB2, CLB3, CDC5, HSL1, MSN5 and PSE1. In terms of processing, phosphorylated at multiple sites by CDC28, probably in its CLB5 bound form, in S, G2 and M phase of the cell cycle, thereby blocking the association of CDH1 to the APC/C and promoting nuclear export of CDH1 by MSN5. Dephosphorylated and activated by CDC14 in late anaphase, which may be necessary for PSE1-dependent nuclear localization.

It localises to the cytoplasm. Its subcellular location is the nucleus. Its function is as follows. Activator protein that regulates the ubiquitin ligase activity and substrate specificity of the anaphase promoting complex/cyclosome (APC/C). During telophase and in the subsequent G1 phase of the cell cycle, recognizes and binds proteins containing a destruction box (D-box) and an additional degradation signal termed the KEN box including ASE1, CDC20, the B-type cyclins CLB2 and CLB3, the polo-like kinase CDC5 and HSL1, and recruits them in a C-box-dependent manner to the APC/C for ubiquitination and subsequent proteolysis. Required for exit from mitosis, cytokinesis and formation of prereplicative complexes in G1. Probably is the target of a BUB2-dependent spindle checkpoint pathway. The polypeptide is APC/C activator protein CDH1 (CDH1) (Saccharomyces cerevisiae (strain ATCC 204508 / S288c) (Baker's yeast)).